The following is a 291-amino-acid chain: uncharacterized protein (291 aa).

NAD(+) is bound by residues 5–19 and threonine 97; that span reads AFIG…MAGH. Lysine 172 is a catalytic residue. NAD(+) is bound at residue lysine 240.

It belongs to the HIBADH-related family.

This is an uncharacterized protein from Shewanella frigidimarina (strain NCIMB 400).